Reading from the N-terminus, the 360-residue chain is ASTRA-associated protein 1 (360 aa).

4 WD repeats span residues alanine 9–arginine 46, alanine 49–glycine 86, arginine 167–leucine 205, and proline 317–leucine 357.

It belongs to the WD repeat ASA1 family. As to quaternary structure, component of the ASTRA chromatin remodeling machinery complex.

It localises to the nucleus. In terms of biological role, component of the ASTRA complex involved in chromatin remodeling. The protein is ASTRA-associated protein 1 (ASA1) of Clavispora lusitaniae (strain ATCC 42720) (Yeast).